A 549-amino-acid polypeptide reads, in one-letter code: Undecaprenyl phosphate-alpha-4-amino-4-deoxy-L-arabinose arabinosyl transferase 1 (549 aa).

The next 12 helical transmembrane spans lie at 9–29 (LLLIAFGLFYLLPLATHGLWI), 80–102 (LFGVRVASALSTGLSVVLAYLLA), 112–132 (SLASALLYMSFTVVALQAGYA), 133–153 (NLDPQFTFWVNLSLVALWFTF), 176–196 (FMTKGFLAWLLPVLVALPYAI), 204–224 (LLIYGGIGVLVAILISLPWAL), 257–277 (WWYYLPLLVGFSVPWVLLLPA), 290–310 (SSGFLLLWLVLPLAFFSLSKG), 312–332 (LPAYILPCLLPLALLMGNTLV), 342–362 (LLAFNGVLNLVAGLLGLLALV), 377–397 (HLVLVYVLLLGWILSNLLQAM), and 402–422 (LWAAPALGSFLLVALAPAALP).

Belongs to the glycosyltransferase 83 family.

The protein resides in the cell inner membrane. It catalyses the reaction 4-amino-4-deoxy-alpha-L-arabinopyranosyl di-trans,octa-cis-undecaprenyl phosphate + lipid IVA = lipid IIA + di-trans,octa-cis-undecaprenyl phosphate.. It participates in lipopolysaccharide metabolism; 4-amino-4-deoxy-beta-L-arabinose-lipid A biosynthesis. Its function is as follows. Catalyzes the transfer of the L-Ara4N moiety of the glycolipid undecaprenyl phosphate-alpha-L-Ara4N to lipid A. The modified arabinose is attached to lipid A and is required for resistance to polymyxin and cationic antimicrobial peptides. This chain is Undecaprenyl phosphate-alpha-4-amino-4-deoxy-L-arabinose arabinosyl transferase 1, found in Pseudomonas fluorescens (strain ATCC BAA-477 / NRRL B-23932 / Pf-5).